Here is a 171-residue protein sequence, read N- to C-terminus: Deoxyuridine 5'-triphosphate nucleotidohydrolase (171 aa).

E143 contributes to the Mg(2+) binding site.

The protein belongs to the dUTPase family. As to quaternary structure, homotrimer. Mg(2+) serves as cofactor.

The enzyme catalyses dUTP + H2O = dUMP + diphosphate + H(+). It functions in the pathway pyrimidine metabolism; dUMP biosynthesis; dUMP from dCTP (dUTP route): step 2/2. Its function is as follows. This enzyme is involved in nucleotide metabolism: it produces dUMP, the immediate precursor of thymidine nucleotides and it decreases the intracellular concentration of dUTP, preventing uracil incorporation into DNA. The chain is Deoxyuridine 5'-triphosphate nucleotidohydrolase (DUT) from Oryza sativa subsp. japonica (Rice).